Reading from the N-terminus, the 159-residue chain is Vesicle transport protein SFT2A (159 aa).

Residues 1–36 (MEKLRRVLSGQDDEEQGLTAQVLDASSLSFNTRLKW) lie on the Cytoplasmic side of the membrane. S9 carries the post-translational modification Phosphoserine. A helical membrane pass occupies residues 37-57 (FVICFVAGIFFSFLGTGLLWL). The Lumenal segment spans residues 58 to 62 (PNGMK). A helical membrane pass occupies residues 63 to 83 (LFAVFYTLGNLAALASTCFLM). Residues 84-97 (GPVKQLKKMFETTR) lie on the Cytoplasmic side of the membrane. The helical transmembrane segment at 98 to 118 (LLATIIMLLCLVFTLCAALWW) threads the bilayer. The Lumenal segment spans residues 119–122 (RKKG). A helical transmembrane segment spans residues 123 to 143 (LALLFCILQFLSMTWYSLSYI). Over 144–159 (PYARDAVLKCCSSLLG) the chain is Cytoplasmic.

It belongs to the SFT2 family.

Its subcellular location is the membrane. Functionally, may be involved in fusion of retrograde transport vesicles derived from an endocytic compartment with the Golgi complex. The protein is Vesicle transport protein SFT2A of Mus musculus (Mouse).